A 442-amino-acid chain; its full sequence is Asparagine--tRNA ligase (442 aa).

Belongs to the class-II aminoacyl-tRNA synthetase family. As to quaternary structure, homodimer.

It is found in the cytoplasm. It carries out the reaction tRNA(Asn) + L-asparagine + ATP = L-asparaginyl-tRNA(Asn) + AMP + diphosphate + H(+). This chain is Asparagine--tRNA ligase, found in Koribacter versatilis (strain Ellin345).